We begin with the raw amino-acid sequence, 255 residues long: MTIKVIIAGFKGKMGSTAVEMVKGDAALSLAALVDPFATETEVDGVPVFKTKEEVASLEADVWVDFTTPKFTYENTRFALENGFAPVVGTTGFTPEEIEELTALSAEKGLGGLIAPNFAIGAILLMQFAAQAAKYFPNLEIIELHHDKKKDAPSGTAVKTAELISQVRQSQTQGAADEEELIAGARGAAFDGFRIHSVRLPGLVAHQEVIFGAQGEGLTIRHDSYDRISFMGGVNLGIKEVVKRSQLVYGLEHLL.

NAD(+)-binding positions include 9-14 (GFKGKM), 89-91 (GTT), and 115-118 (APNF). H145 functions as the Proton donor/acceptor in the catalytic mechanism. Residue H146 participates in (S)-2,3,4,5-tetrahydrodipicolinate binding. K149 serves as the catalytic Proton donor. A (S)-2,3,4,5-tetrahydrodipicolinate-binding site is contributed by 155–156 (GT).

Belongs to the DapB family.

The protein localises to the cytoplasm. It catalyses the reaction (S)-2,3,4,5-tetrahydrodipicolinate + NAD(+) + H2O = (2S,4S)-4-hydroxy-2,3,4,5-tetrahydrodipicolinate + NADH + H(+). The catalysed reaction is (S)-2,3,4,5-tetrahydrodipicolinate + NADP(+) + H2O = (2S,4S)-4-hydroxy-2,3,4,5-tetrahydrodipicolinate + NADPH + H(+). It functions in the pathway amino-acid biosynthesis; L-lysine biosynthesis via DAP pathway; (S)-tetrahydrodipicolinate from L-aspartate: step 4/4. Functionally, catalyzes the conversion of 4-hydroxy-tetrahydrodipicolinate (HTPA) to tetrahydrodipicolinate. The polypeptide is 4-hydroxy-tetrahydrodipicolinate reductase (Streptococcus suis (strain 98HAH33)).